The sequence spans 307 residues: MATH domain and coiled-coil domain-containing protein At3g58380 (307 aa).

Residues 6–132 form the MATH domain; that stretch reads DKKFVWVIKD…CREITIVIEV (127 aa). Residues 238–290 are a coiled coil; the sequence is KVDWLEKKLKEVKEKKKNVDNGKARLQQIEEDLQKLNQKRLDLKDILDKEKAN.

The chain is MATH domain and coiled-coil domain-containing protein At3g58380 from Arabidopsis thaliana (Mouse-ear cress).